A 408-amino-acid polypeptide reads, in one-letter code: CinA-like protein (408 aa).

This sequence belongs to the CinA family.

This is CinA-like protein from Fervidobacterium nodosum (strain ATCC 35602 / DSM 5306 / Rt17-B1).